A 1088-amino-acid polypeptide reads, in one-letter code: Adenylate-forming reductase Nps10 (1088 aa).

Positions 1 to 22 (MSSVSIQIPLPTPPPTQAHNSQ) are disordered. Residues 38–451 (FDWHSKNSPN…KIFGRTDDQI (414 aa)) are adenylation (A) domain. Residues histidine 261, 357 to 358 (NL), threonine 362, and 443 to 446 (IFGR) contribute to the AMP site. The 83-residue stretch at 586-668 (AWDSAKTLGF…SLASFVSSVA (83 aa)) folds into the Carrier domain. The residue at position 621 (serine 621) is an O-(pantetheine 4'-phosphoryl)serine. The interval 712-951 (LTGSTGALGS…IPVNVAAAAI (240 aa)) is reductase (R) domain. NADP(+) is bound by residues 716–719 (TGAL), 804–806 (NAW), tyrosine 875, and lysine 879.

It belongs to the adenylate-forming reductase family.

Functionally, adenylate-forming reductase, a natural product biosynthesis enzyme that resembles non-ribosomal peptide synthetases, yet serves to modify one substrate, rather than to condense two or more building blocks. The A-domain preferentially accepts phenylpyruvic acid and benzoic acid as substrate. The natural product of the enzyme is not yet known. In Heterobasidion annosum (Root rot fungus), this protein is Adenylate-forming reductase Nps10.